A 359-amino-acid chain; its full sequence is Hsp70-binding protein 1 (359 aa).

A disordered region spans residues 1-71 (MSDEGSRGSR…PPPEPMSEER (71 aa)). The segment covering 23 to 37 (SSGGGGGGSSAGGSG) has biased composition (gly residues). ARM repeat units lie at residues 132 to 174 (ENMD…TCSQ), 177 to 217 (AAIQ…CLVR), 220 to 259 (EAGL…NLLV), and 262 to 301 (PEHK…SLVT). A phosphoserine mark is found at Ser-351 and Ser-356.

Interacts with the ATP-binding domain of HSPA1A. Detected in a ternary complex containing STUB1, HSPA1A and HSPBP1. Interacts with PGLYRP1; this interaction blocks the cytotoxic activity of the PGLYRP1-HSPA1A complex. Ubiquitous.

In terms of biological role, inhibits HSPA1A chaperone activity by changing the conformation of the ATP-binding domain of HSPA1A and interfering with ATP binding. Interferes with ubiquitination mediated by STUB1 and inhibits chaperone-assisted degradation of immature CFTR. The chain is Hsp70-binding protein 1 from Homo sapiens (Human).